The sequence spans 135 residues: Large-conductance mechanosensitive channel (135 aa).

2 helical membrane passes run 9–29 (AFAA…GAAF) and 79–99 (IQTI…LKAI).

This sequence belongs to the MscL family. In terms of assembly, homopentamer.

It localises to the cell inner membrane. Functionally, channel that opens in response to stretch forces in the membrane lipid bilayer. May participate in the regulation of osmotic pressure changes within the cell. The sequence is that of Large-conductance mechanosensitive channel from Aeromonas salmonicida (strain A449).